The following is a 335-amino-acid chain: Glucokinase (335 aa).

11 to 16 provides a ligand contact to ATP; it reads ADIGGT.

The protein belongs to the bacterial glucokinase family.

The protein resides in the cytoplasm. The catalysed reaction is D-glucose + ATP = D-glucose 6-phosphate + ADP + H(+). The sequence is that of Glucokinase from Stenotrophomonas maltophilia (strain K279a).